The following is a 106-amino-acid chain: ATP-dependent Clp protease adapter protein ClpS (106 aa).

This sequence belongs to the ClpS family. Binds to the N-terminal domain of the chaperone ClpA.

Involved in the modulation of the specificity of the ClpAP-mediated ATP-dependent protein degradation. This Enterobacter sp. (strain 638) protein is ATP-dependent Clp protease adapter protein ClpS.